An 801-amino-acid polypeptide reads, in one-letter code: Na(+)/H(+) antiporter subunit A1 (801 aa).

Helical transmembrane passes span 4-25, 30-49, 79-101, 108-127, 131-153, 166-188, 208-230, 243-265, 270-289, 302-324, 339-361, 373-395, 429-451, 472-494, 526-548, 589-611, 621-641, 646-668, 672-694, 707-729, and 767-784; these read LHIA…YRFF, LGWF…LTLI, LGLL…SIGY, LGNF…GVVL, VIIL…SFWR, LIIT…IPTQ, FIFA…PFYI, SAYL…MTPI, QGWV…WASL, AFST…ISYH, AAIF…TGAV, LGGL…LSMA, YLFP…KFIM, ILML…FPGI, AFLS…SYWV, NNLV…SVPF, IRIF…LILF, LFSI…FFKA, ALTQ…YHLP, LTNA…IAYG, and LFES…YTMI.

Belongs to the CPA3 antiporters (TC 2.A.63) subunit A family. As to quaternary structure, may form a heterooligomeric complex that consists of seven subunits: mnhA1, mnhB1, mnhC1, mnhD1, mnhE1, mnhF1 and mnhG1.

Its subcellular location is the cell membrane. Na(+) extrusion is completely inhibited by the H(+) conductor carbonyl cyanide m-chlorophenylhydrazone (CCCP). Mnh complex is a Na(+)/H(+) antiporter involved in Na(+) excretion. The sequence is that of Na(+)/H(+) antiporter subunit A1 (mnhA1) from Staphylococcus aureus (strain MSSA476).